A 278-amino-acid polypeptide reads, in one-letter code: uncharacterized protein (278 aa).

One can recognise a Response regulatory domain in the interval 1 to 55 (MKIRERFSMVDLPVLIITAAIIGHDKYKAFHAGANDILQKPYHYSEFMARIQNLI).

This is an uncharacterized protein from Bacillus subtilis (strain 168).